A 190-amino-acid polypeptide reads, in one-letter code: NADH-quinone oxidoreductase subunit C (190 aa).

The protein belongs to the complex I 30 kDa subunit family. As to quaternary structure, NDH-1 is composed of 14 different subunits. Subunits NuoB, C, D, E, F, and G constitute the peripheral sector of the complex.

The protein resides in the cell membrane. It carries out the reaction a quinone + NADH + 5 H(+)(in) = a quinol + NAD(+) + 4 H(+)(out). Functionally, NDH-1 shuttles electrons from NADH, via FMN and iron-sulfur (Fe-S) centers, to quinones in the respiratory chain. The immediate electron acceptor for the enzyme in this species is believed to be ubiquinone. Couples the redox reaction to proton translocation (for every two electrons transferred, four hydrogen ions are translocated across the cytoplasmic membrane), and thus conserves the redox energy in a proton gradient. In Wolbachia sp. subsp. Brugia malayi (strain TRS), this protein is NADH-quinone oxidoreductase subunit C.